The sequence spans 92 residues: PqqA binding protein (92 aa).

The protein belongs to the PqqD family. As to quaternary structure, monomer. Interacts with PqqE.

It functions in the pathway cofactor biosynthesis; pyrroloquinoline quinone biosynthesis. In terms of biological role, functions as a PqqA binding protein and presents PqqA to PqqE, in the pyrroloquinoline quinone (PQQ) biosynthetic pathway. The chain is PqqA binding protein from Xanthomonas campestris pv. campestris (strain 8004).